Consider the following 381-residue polypeptide: N-acetyldiaminopimelate deacetylase (381 aa).

The active site involves Asp-73. The active-site Proton acceptor is Glu-132.

Belongs to the peptidase M20A family. N-acetyldiaminopimelate deacetylase subfamily.

It carries out the reaction N-acetyl-(2S,6S)-2,6-diaminopimelate + H2O = (2S,6S)-2,6-diaminopimelate + acetate. Its pathway is amino-acid biosynthesis; L-lysine biosynthesis via DAP pathway; LL-2,6-diaminopimelate from (S)-tetrahydrodipicolinate (acetylase route): step 3/3. In terms of biological role, catalyzes the conversion of N-acetyl-diaminopimelate to diaminopimelate and acetate. This chain is N-acetyldiaminopimelate deacetylase, found in Limosilactobacillus reuteri (strain DSM 20016) (Lactobacillus reuteri).